Reading from the N-terminus, the 320-residue chain is Ribosomal protein L11 methyltransferase (320 aa).

Positions 165, 186, 208, and 251 each coordinate S-adenosyl-L-methionine.

Belongs to the methyltransferase superfamily. PrmA family.

It is found in the cytoplasm. It catalyses the reaction L-lysyl-[protein] + 3 S-adenosyl-L-methionine = N(6),N(6),N(6)-trimethyl-L-lysyl-[protein] + 3 S-adenosyl-L-homocysteine + 3 H(+). Its function is as follows. Methylates ribosomal protein L11. The protein is Ribosomal protein L11 methyltransferase of Limosilactobacillus fermentum (strain NBRC 3956 / LMG 18251) (Lactobacillus fermentum).